Consider the following 321-residue polypeptide: Lipoyl synthase (321 aa).

[4Fe-4S] cluster-binding residues include C68, C73, C79, C94, C98, C101, and S308. In terms of domain architecture, Radical SAM core spans 80–297 (FNHGTATFMI…KAEALAMGFT (218 aa)).

This sequence belongs to the radical SAM superfamily. Lipoyl synthase family. [4Fe-4S] cluster is required as a cofactor.

It is found in the cytoplasm. It catalyses the reaction [[Fe-S] cluster scaffold protein carrying a second [4Fe-4S](2+) cluster] + N(6)-octanoyl-L-lysyl-[protein] + 2 oxidized [2Fe-2S]-[ferredoxin] + 2 S-adenosyl-L-methionine + 4 H(+) = [[Fe-S] cluster scaffold protein] + N(6)-[(R)-dihydrolipoyl]-L-lysyl-[protein] + 4 Fe(3+) + 2 hydrogen sulfide + 2 5'-deoxyadenosine + 2 L-methionine + 2 reduced [2Fe-2S]-[ferredoxin]. It functions in the pathway protein modification; protein lipoylation via endogenous pathway; protein N(6)-(lipoyl)lysine from octanoyl-[acyl-carrier-protein]: step 2/2. Catalyzes the radical-mediated insertion of two sulfur atoms into the C-6 and C-8 positions of the octanoyl moiety bound to the lipoyl domains of lipoate-dependent enzymes, thereby converting the octanoylated domains into lipoylated derivatives. This chain is Lipoyl synthase, found in Edwardsiella ictaluri (strain 93-146).